The primary structure comprises 134 residues: 6,7-dimethyl-8-ribityllumazine synthase (134 aa).

Residues Phe11, Ala43–Asp45, and Ala67–Val69 contribute to the 5-amino-6-(D-ribitylamino)uracil site. Residue Asp72 to Thr73 coordinates (2S)-2-hydroxy-3-oxobutyl phosphate. His75 (proton donor) is an active-site residue. Phe100 serves as a coordination point for 5-amino-6-(D-ribitylamino)uracil. Arg115 is a (2S)-2-hydroxy-3-oxobutyl phosphate binding site.

This sequence belongs to the DMRL synthase family.

It carries out the reaction (2S)-2-hydroxy-3-oxobutyl phosphate + 5-amino-6-(D-ribitylamino)uracil = 6,7-dimethyl-8-(1-D-ribityl)lumazine + phosphate + 2 H2O + H(+). Its pathway is cofactor biosynthesis; riboflavin biosynthesis; riboflavin from 2-hydroxy-3-oxobutyl phosphate and 5-amino-6-(D-ribitylamino)uracil: step 1/2. Functionally, catalyzes the formation of 6,7-dimethyl-8-ribityllumazine by condensation of 5-amino-6-(D-ribitylamino)uracil with 3,4-dihydroxy-2-butanone 4-phosphate. This is the penultimate step in the biosynthesis of riboflavin. This is 6,7-dimethyl-8-ribityllumazine synthase from Halorubrum lacusprofundi (strain ATCC 49239 / DSM 5036 / JCM 8891 / ACAM 34).